The chain runs to 219 residues: Ras-related protein Rab-32A (219 aa).

22 to 29 provides a ligand contact to GTP; it reads GDIGTGKT. An Effector region motif is present at residues 44-52; that stretch reads YKSTIGVDF. GTP is bound by residues 71 to 75 and 134 to 137; these read DIAGQ and NKCD. Residues 192–219 form a disordered region; sequence NQPIEGTIQPGDLNKQPQPTSTGPSCCK. Residues 206–219 show a composition bias toward polar residues; that stretch reads KQPQPTSTGPSCCK. 2 S-geranylgeranyl cysteine lipidation sites follow: C217 and C218.

Belongs to the small GTPase superfamily. Rab family.

This Dictyostelium discoideum (Social amoeba) protein is Ras-related protein Rab-32A (rab32A).